A 436-amino-acid polypeptide reads, in one-letter code: Adenylosuccinate synthetase (436 aa).

GTP-binding positions include 12 to 18 (GDEGKGK) and 40 to 42 (GHT). The active-site Proton acceptor is D13. 2 residues coordinate Mg(2+): D13 and G40. IMP-binding positions include 13–16 (DEGK), 38–41 (NAGH), T128, R142, Q223, T238, and R302. Residue H41 is the Proton donor of the active site. 298–304 (TTTGRRR) lines the substrate pocket. GTP-binding positions include R304, 330 to 332 (KLD), and 412 to 414 (SLG).

The protein belongs to the adenylosuccinate synthetase family. In terms of assembly, homodimer. It depends on Mg(2+) as a cofactor.

It localises to the cytoplasm. It catalyses the reaction IMP + L-aspartate + GTP = N(6)-(1,2-dicarboxyethyl)-AMP + GDP + phosphate + 2 H(+). It participates in purine metabolism; AMP biosynthesis via de novo pathway; AMP from IMP: step 1/2. Plays an important role in the de novo pathway of purine nucleotide biosynthesis. Catalyzes the first committed step in the biosynthesis of AMP from IMP. In Prochlorococcus marinus subsp. pastoris (strain CCMP1986 / NIES-2087 / MED4), this protein is Adenylosuccinate synthetase.